The following is an 80-amino-acid chain: Putative membrane protein insertion efficiency factor (80 aa).

It belongs to the UPF0161 family.

It is found in the cell inner membrane. Its function is as follows. Could be involved in insertion of integral membrane proteins into the membrane. In Picosynechococcus sp. (strain ATCC 27264 / PCC 7002 / PR-6) (Agmenellum quadruplicatum), this protein is Putative membrane protein insertion efficiency factor.